The primary structure comprises 463 residues: Elongation factor 1-alpha (463 aa).

The 238-residue stretch at 5-242 (KTHINIVVIG…DAILPPARPT (238 aa)) folds into the tr-type G domain. A G1 region spans residues 14 to 21 (GHVDSGKS). 14–21 (GHVDSGKS) is a GTP binding site. The G2 stretch occupies residues 70 to 74 (GITID). The segment at 91 to 94 (DAPG) is G3. GTP is bound by residues 91 to 95 (DAPGH) and 153 to 156 (NKMD). A G4 region spans residues 153–156 (NKMD). Residues 194–196 (SGW) are G5. 5-glutamyl glycerylphosphorylethanolamine is present on residues E301 and E374.

It belongs to the TRAFAC class translation factor GTPase superfamily. Classic translation factor GTPase family. EF-Tu/EF-1A subfamily.

The protein localises to the cytoplasm. This protein promotes the GTP-dependent binding of aminoacyl-tRNA to the A-site of ribosomes during protein biosynthesis. The sequence is that of Elongation factor 1-alpha from Bombyx mori (Silk moth).